The chain runs to 372 residues: Queuine tRNA-ribosyltransferase (372 aa).

Asp92 (proton acceptor) is an active-site residue. Substrate-binding positions include 92–96, Asp146, Gln188, and Gly215; that span reads DSGGY. The segment at 246–252 is RNA binding; that stretch reads GIGTIRE. The active-site Nucleophile is Asp265. Positions 270 to 274 are RNA binding; important for wobble base 34 recognition; it reads TRLGR. The Zn(2+) site is built by Cys303, Cys305, Cys308, and His334.

This sequence belongs to the queuine tRNA-ribosyltransferase family. As to quaternary structure, homodimer. Within each dimer, one monomer is responsible for RNA recognition and catalysis, while the other monomer binds to the replacement base PreQ1. The cofactor is Zn(2+).

It catalyses the reaction 7-aminomethyl-7-carbaguanine + guanosine(34) in tRNA = 7-aminomethyl-7-carbaguanosine(34) in tRNA + guanine. It functions in the pathway tRNA modification; tRNA-queuosine biosynthesis. In terms of biological role, catalyzes the base-exchange of a guanine (G) residue with the queuine precursor 7-aminomethyl-7-deazaguanine (PreQ1) at position 34 (anticodon wobble position) in tRNAs with GU(N) anticodons (tRNA-Asp, -Asn, -His and -Tyr). Catalysis occurs through a double-displacement mechanism. The nucleophile active site attacks the C1' of nucleotide 34 to detach the guanine base from the RNA, forming a covalent enzyme-RNA intermediate. The proton acceptor active site deprotonates the incoming PreQ1, allowing a nucleophilic attack on the C1' of the ribose to form the product. After dissociation, two additional enzymatic reactions on the tRNA convert PreQ1 to queuine (Q), resulting in the hypermodified nucleoside queuosine (7-(((4,5-cis-dihydroxy-2-cyclopenten-1-yl)amino)methyl)-7-deazaguanosine). The sequence is that of Queuine tRNA-ribosyltransferase from Prochlorococcus marinus (strain SARG / CCMP1375 / SS120).